Consider the following 259-residue polypeptide: Phosphatidylglycerol--prolipoprotein diacylglyceryl transferase (259 aa).

The next 4 membrane-spanning stretches (helical) occupy residues 9 to 29 (IGPFAIHWYALCIMTGLVLAV), 47 to 67 (IDFIIIAFPIAIIGARLYYVI), 83 to 103 (IWNGGIAIYGGLITGAIVLFI), and 109 to 129 (VLNPIRFLDIIAPGVMLAQAI). A 1,2-diacyl-sn-glycero-3-phospho-(1'-sn-glycerol) is bound at residue Arg-131. Transmembrane regions (helical) follow at residues 167-187 (MPTFLFESVWNIIGFTIICYL), 194-214 (LLEGEVLAFYLIWYGIGRFVI), and 227-247 (LRVSQIVSIVLIILGIVFVIL).

Belongs to the Lgt family.

The protein resides in the cell membrane. The enzyme catalyses L-cysteinyl-[prolipoprotein] + a 1,2-diacyl-sn-glycero-3-phospho-(1'-sn-glycerol) = an S-1,2-diacyl-sn-glyceryl-L-cysteinyl-[prolipoprotein] + sn-glycerol 1-phosphate + H(+). It functions in the pathway protein modification; lipoprotein biosynthesis (diacylglyceryl transfer). Catalyzes the transfer of the diacylglyceryl group from phosphatidylglycerol to the sulfhydryl group of the N-terminal cysteine of a prolipoprotein, the first step in the formation of mature lipoproteins. The sequence is that of Phosphatidylglycerol--prolipoprotein diacylglyceryl transferase from Streptococcus uberis (strain ATCC BAA-854 / 0140J).